The chain runs to 342 residues: Phosphoribosylformylglycinamidine cyclo-ligase (342 aa).

It belongs to the AIR synthase family.

It localises to the cytoplasm. It catalyses the reaction 2-formamido-N(1)-(5-O-phospho-beta-D-ribosyl)acetamidine + ATP = 5-amino-1-(5-phospho-beta-D-ribosyl)imidazole + ADP + phosphate + H(+). Its pathway is purine metabolism; IMP biosynthesis via de novo pathway; 5-amino-1-(5-phospho-D-ribosyl)imidazole from N(2)-formyl-N(1)-(5-phospho-D-ribosyl)glycinamide: step 2/2. The chain is Phosphoribosylformylglycinamidine cyclo-ligase from Latilactobacillus sakei subsp. sakei (strain 23K) (Lactobacillus sakei subsp. sakei).